Here is a 170-residue protein sequence, read N- to C-terminus: Adenine phosphoribosyltransferase (170 aa).

This sequence belongs to the purine/pyrimidine phosphoribosyltransferase family. As to quaternary structure, homodimer.

The protein localises to the cytoplasm. It carries out the reaction AMP + diphosphate = 5-phospho-alpha-D-ribose 1-diphosphate + adenine. It participates in purine metabolism; AMP biosynthesis via salvage pathway; AMP from adenine: step 1/1. Its function is as follows. Catalyzes a salvage reaction resulting in the formation of AMP, that is energically less costly than de novo synthesis. This chain is Adenine phosphoribosyltransferase, found in Streptococcus pneumoniae (strain Hungary19A-6).